The primary structure comprises 399 residues: Chorismate synthase (399 aa).

Positions 40 and 46 each coordinate NADP(+). FMN is bound by residues 135-137, 256-257, Gly301, 316-320, and Arg342; these read RAS, QA, and KPIAT.

The protein belongs to the chorismate synthase family. As to quaternary structure, homotetramer. It depends on FMNH2 as a cofactor.

It catalyses the reaction 5-O-(1-carboxyvinyl)-3-phosphoshikimate = chorismate + phosphate. The protein operates within metabolic intermediate biosynthesis; chorismate biosynthesis; chorismate from D-erythrose 4-phosphate and phosphoenolpyruvate: step 7/7. Functionally, catalyzes the anti-1,4-elimination of the C-3 phosphate and the C-6 proR hydrogen from 5-enolpyruvylshikimate-3-phosphate (EPSP) to yield chorismate, which is the branch point compound that serves as the starting substrate for the three terminal pathways of aromatic amino acid biosynthesis. This reaction introduces a second double bond into the aromatic ring system. The chain is Chorismate synthase from Pseudarthrobacter chlorophenolicus (strain ATCC 700700 / DSM 12829 / CIP 107037 / JCM 12360 / KCTC 9906 / NCIMB 13794 / A6) (Arthrobacter chlorophenolicus).